The following is an 881-amino-acid chain: Alanine--tRNA ligase (881 aa).

Zn(2+) is bound by residues histidine 564, histidine 568, cysteine 666, and histidine 670.

Belongs to the class-II aminoacyl-tRNA synthetase family. Requires Zn(2+) as cofactor.

The protein localises to the cytoplasm. It catalyses the reaction tRNA(Ala) + L-alanine + ATP = L-alanyl-tRNA(Ala) + AMP + diphosphate. Functionally, catalyzes the attachment of alanine to tRNA(Ala) in a two-step reaction: alanine is first activated by ATP to form Ala-AMP and then transferred to the acceptor end of tRNA(Ala). Also edits incorrectly charged Ser-tRNA(Ala) and Gly-tRNA(Ala) via its editing domain. The protein is Alanine--tRNA ligase of Caldicellulosiruptor saccharolyticus (strain ATCC 43494 / DSM 8903 / Tp8T 6331).